Consider the following 367-residue polypeptide: Phosphoribosylaminoimidazole-succinocarboxamide synthase (367 aa).

It belongs to the SAICAR synthetase family.

The enzyme catalyses 5-amino-1-(5-phospho-D-ribosyl)imidazole-4-carboxylate + L-aspartate + ATP = (2S)-2-[5-amino-1-(5-phospho-beta-D-ribosyl)imidazole-4-carboxamido]succinate + ADP + phosphate + 2 H(+). Its pathway is purine metabolism; IMP biosynthesis via de novo pathway; 5-amino-1-(5-phospho-D-ribosyl)imidazole-4-carboxamide from 5-amino-1-(5-phospho-D-ribosyl)imidazole-4-carboxylate: step 1/2. In Aeromonas salmonicida (strain A449), this protein is Phosphoribosylaminoimidazole-succinocarboxamide synthase.